The chain runs to 375 residues: Succinyl-diaminopimelate desuccinylase (375 aa).

Histidine 66 contributes to the Zn(2+) binding site. The active site involves aspartate 68. Aspartate 99 is a Zn(2+) binding site. The Proton acceptor role is filled by glutamate 133. Residues glutamate 134, glutamate 162, and histidine 348 each contribute to the Zn(2+) site.

This sequence belongs to the peptidase M20A family. DapE subfamily. As to quaternary structure, homodimer. Zn(2+) is required as a cofactor. The cofactor is Co(2+).

It catalyses the reaction N-succinyl-(2S,6S)-2,6-diaminopimelate + H2O = (2S,6S)-2,6-diaminopimelate + succinate. It participates in amino-acid biosynthesis; L-lysine biosynthesis via DAP pathway; LL-2,6-diaminopimelate from (S)-tetrahydrodipicolinate (succinylase route): step 3/3. Functionally, catalyzes the hydrolysis of N-succinyl-L,L-diaminopimelic acid (SDAP), forming succinate and LL-2,6-diaminopimelate (DAP), an intermediate involved in the bacterial biosynthesis of lysine and meso-diaminopimelic acid, an essential component of bacterial cell walls. This is Succinyl-diaminopimelate desuccinylase from Alkalilimnicola ehrlichii (strain ATCC BAA-1101 / DSM 17681 / MLHE-1).